The following is a 229-amino-acid chain: Ribosome maturation factor RimM (229 aa).

Residues 148–229 (ADEFYWVDLI…RVVVDWEADY (82 aa)) form the PRC barrel domain.

The protein belongs to the RimM family. Binds ribosomal protein uS19.

Its subcellular location is the cytoplasm. Its function is as follows. An accessory protein needed during the final step in the assembly of 30S ribosomal subunit, possibly for assembly of the head region. Essential for efficient processing of 16S rRNA. May be needed both before and after RbfA during the maturation of 16S rRNA. It has affinity for free ribosomal 30S subunits but not for 70S ribosomes. This is Ribosome maturation factor RimM from Burkholderia pseudomallei (strain 1710b).